Here is a 165-residue protein sequence, read N- to C-terminus: Probable deoxyuridine 5'-triphosphate nucleotidohydrolase (165 aa).

Residues G39 to G49 are compositionally biased toward basic and acidic residues. The disordered stretch occupies residues G39 to D64.

It belongs to the dCTP deaminase family. Archaeal dUTPase subfamily.

It catalyses the reaction dUTP + H2O = dUMP + diphosphate + H(+). Its pathway is pyrimidine metabolism; dUMP biosynthesis; dUMP from dCTP (dUTP route): step 2/2. In terms of biological role, this enzyme is involved in nucleotide metabolism: it produces dUMP, the immediate precursor of thymidine nucleotides and it decreases the intracellular concentration of dUTP so that uracil cannot be incorporated into DNA. The sequence is that of Probable deoxyuridine 5'-triphosphate nucleotidohydrolase from Halobacterium salinarum (strain ATCC 29341 / DSM 671 / R1).